The chain runs to 270 residues: uncharacterized protein (270 aa).

Basic and acidic residues predominate over residues Glu22–Arg31. A disordered region spans residues Glu22–Gly42.

This is an uncharacterized protein from Homo sapiens (Human).